The sequence spans 312 residues: Cell division control protein 2 homolog D (312 aa).

The region spanning 14 to 304 (FVKLEKVGEG…AKKAMEHPYF (291 aa)) is the Protein kinase domain. ATP-binding positions include 20 to 28 (VGEGTYGKV) and Lys43. Thr24 bears the Phosphothreonine mark. Tyr25 is modified (phosphotyrosine). Residue Asp145 is the Proton acceptor of the active site. The residue at position 179 (Thr179) is a Phosphothreonine; by CAK.

Belongs to the protein kinase superfamily. CMGC Ser/Thr protein kinase family. CDC2/CDKX subfamily.

The enzyme catalyses L-seryl-[protein] + ATP = O-phospho-L-seryl-[protein] + ADP + H(+). The catalysed reaction is L-threonyl-[protein] + ATP = O-phospho-L-threonyl-[protein] + ADP + H(+). It carries out the reaction [DNA-directed RNA polymerase] + ATP = phospho-[DNA-directed RNA polymerase] + ADP + H(+). Plays a key role in the control of the eukaryotic cell cycle. In Antirrhinum majus (Garden snapdragon), this protein is Cell division control protein 2 homolog D (CDC2D).